A 406-amino-acid polypeptide reads, in one-letter code: Arginine deiminase (406 aa).

The active-site Amidino-cysteine intermediate is C396.

Belongs to the arginine deiminase family.

Its subcellular location is the cytoplasm. It catalyses the reaction L-arginine + H2O = L-citrulline + NH4(+). The protein operates within amino-acid degradation; L-arginine degradation via ADI pathway; carbamoyl phosphate from L-arginine: step 1/2. The chain is Arginine deiminase from Aliivibrio fischeri (strain MJ11) (Vibrio fischeri).